A 135-amino-acid chain; its full sequence is Large ribosomal subunit protein bL19 (135 aa).

The protein belongs to the bacterial ribosomal protein bL19 family.

Its function is as follows. This protein is located at the 30S-50S ribosomal subunit interface and may play a role in the structure and function of the aminoacyl-tRNA binding site. The polypeptide is Large ribosomal subunit protein bL19 (Protochlamydia amoebophila (strain UWE25)).